Consider the following 142-residue polypeptide: Hemoglobin subunit alpha-1 (142 aa).

Residue S1 is modified to N-acetylserine. Residues S1 to R142 form the Globin domain. O2 is bound at residue H59. Residue H88 participates in heme b binding.

Belongs to the globin family. Hb 1 is a heterotetramer of two alpha-1 and two beta-1 chains. Red blood cells.

Its function is as follows. Involved in oxygen transport from gills to the various peripheral tissues. This is Hemoglobin subunit alpha-1 (hba1) from Gobionotothen gibberifrons (Humped rockcod).